The sequence spans 103 residues: Large ribosomal subunit protein bL21 (103 aa).

Belongs to the bacterial ribosomal protein bL21 family. Part of the 50S ribosomal subunit. Contacts protein L20.

Functionally, this protein binds to 23S rRNA in the presence of protein L20. The polypeptide is Large ribosomal subunit protein bL21 (Desulforapulum autotrophicum (strain ATCC 43914 / DSM 3382 / VKM B-1955 / HRM2) (Desulfobacterium autotrophicum)).